Consider the following 234-residue polypeptide: Proteasome subunit alpha type-6 (234 aa).

The residue at position 14 (Ser14) is a Phosphoserine. A Glycyl lysine isopeptide (Lys-Gly) (interchain with G-Cter in ubiquitin) cross-link involves residue Lys191.

It belongs to the peptidase T1A family. In terms of assembly, the 26S proteasome consists of a 20S proteasome core and two 19S regulatory subunits. The 20S proteasome core is composed of 28 subunits that are arranged in four stacked rings, resulting in a barrel-shaped structure. The two end rings are each formed by seven alpha subunits, and the two central rings are each formed by seven beta subunits. The catalytic chamber with the active sites is on the inside of the barrel.

It localises to the cytoplasm. Its subcellular location is the nucleus. Functionally, the proteasome degrades poly-ubiquitinated proteins in the cytoplasm and in the nucleus. It is essential for the regulated turnover of proteins and for the removal of misfolded proteins. The proteasome is a multicatalytic proteinase complex that is characterized by its ability to cleave peptides with Arg, Phe, Tyr, Leu, and Glu adjacent to the leaving group at neutral or slightly basic pH. It has an ATP-dependent proteolytic activity. The protein is Proteasome subunit alpha type-6 (PRE5) of Saccharomyces cerevisiae (strain ATCC 204508 / S288c) (Baker's yeast).